The primary structure comprises 311 residues: MRKIVIGTRRSKLALTQTNWVIDQLKQLGVPYEFEVKEIVTKGDRILDVTLSKVGGKGLFVKEIEAALRSGEIDVAVHSMKDVPSELLEEFTLAAITEREDPRDVLVSENGHTLDELPAGAIVGTSSLRRSAQILHRRPDVQVKWIRGNVETRLRKLKEEDFSAIVLAAAGLKRLGYGEDVITEYLDKDVCLPAIGQGALGLECRVDDVETTELLAKLHHEETGKAVLAERAFLKEMNGGCQVPIGGYATVLEDGAVFLTGLVGSPDGKTILKEGKCGMVADELGKEVSSLLTAQGAGAILEKVRSELEGS.

Cys241 carries the S-(dipyrrolylmethanemethyl)cysteine modification.

The protein belongs to the HMBS family. As to quaternary structure, monomer. Dipyrromethane is required as a cofactor.

It catalyses the reaction 4 porphobilinogen + H2O = hydroxymethylbilane + 4 NH4(+). Its pathway is porphyrin-containing compound metabolism; protoporphyrin-IX biosynthesis; coproporphyrinogen-III from 5-aminolevulinate: step 2/4. In terms of biological role, tetrapolymerization of the monopyrrole PBG into the hydroxymethylbilane pre-uroporphyrinogen in several discrete steps. The chain is Porphobilinogen deaminase from Shouchella clausii (strain KSM-K16) (Alkalihalobacillus clausii).